Consider the following 427-residue polypeptide: mRNA cap guanine-N(7) methyltransferase (427 aa).

The segment at 1-79 (MSLNYEQNAA…EPETEAASGA (79 aa)) is disordered. A phosphoserine mark is found at Ser-22, Ser-24, Ser-29, Ser-46, and Ser-48. Residues 44 to 57 (HVSKSPREYYDEPG) are compositionally biased toward basic and acidic residues. Residues 103-411 (SKIFFMRNFN…LYLVCAFKKC (309 aa)) form the mRNA cap 0 methyltransferase domain. 112 to 113 (NN) contributes to the mRNA binding site. Residues Lys-116, Cys-143, Asp-165, Asp-202, Gln-225, and Tyr-230 each contribute to the S-adenosyl-L-methionine site.

Belongs to the class I-like SAM-binding methyltransferase superfamily. mRNA cap 0 methyltransferase family.

The protein localises to the nucleus. The catalysed reaction is a 5'-end (5'-triphosphoguanosine)-ribonucleoside in mRNA + S-adenosyl-L-methionine = a 5'-end (N(7)-methyl 5'-triphosphoguanosine)-ribonucleoside in mRNA + S-adenosyl-L-homocysteine. Functionally, mRNA-capping methyltransferase that methylates the N7 position of the added guanosine to the 5'-cap structure of mRNAs. Binds RNA containing 5'-terminal GpppC. In Drosophila melanogaster (Fruit fly), this protein is mRNA cap guanine-N(7) methyltransferase.